Reading from the N-terminus, the 252-residue chain is Chitooligosaccharide deacetylase (252 aa).

Mg(2+) contacts are provided by His-61 and His-125.

The protein belongs to the YdjC deacetylase family. ChbG subfamily. Homodimer. It depends on Mg(2+) as a cofactor.

It localises to the cytoplasm. The catalysed reaction is N,N'-diacetylchitobiose + H2O = N-acetyl-beta-D-glucosaminyl-(1-&gt;4)-D-glucosamine + acetate. It carries out the reaction diacetylchitobiose-6'-phosphate + H2O = N'-monoacetylchitobiose-6'-phosphate + acetate. It functions in the pathway glycan degradation; chitin degradation. Its function is as follows. Involved in the degradation of chitin. ChbG is essential for growth on the acetylated chitooligosaccharides chitobiose and chitotriose but is dispensable for growth on cellobiose and chitosan dimer, the deacetylated form of chitobiose. Deacetylation of chitobiose-6-P and chitotriose-6-P is necessary for both the activation of the chb promoter by the regulatory protein ChbR and the hydrolysis of phosphorylated beta-glucosides by the phospho-beta-glucosidase ChbF. Catalyzes the removal of only one acetyl group from chitobiose-6-P to yield monoacetylchitobiose-6-P, the inducer of ChbR and the substrate of ChbF. This is Chitooligosaccharide deacetylase from Escherichia coli O6:H1 (strain CFT073 / ATCC 700928 / UPEC).